Consider the following 462-residue polypeptide: NAD-capped RNA hydrolase NUDT12 (462 aa).

ANK repeat units follow at residues 11-40 (EIVTQFHCSAAEGDIAKLTGILSHSPSLLN), 45-74 (NGWTALMYAARNGHPEIVQFLLEKGCDRSI), and 78-98 (SRQTALDIAVFWGYKHIANLL). At K185 the chain carries N6-succinyllysine. Positions 284 and 287 each coordinate Zn(2+). K292 carries the post-translational modification N6-succinyllysine. Zn(2+) contacts are provided by C302 and C307. Substrate-binding positions include Y318, 354–356 (AGF), E370, E374, and E415. The 135-residue stretch at 319–453 (PRVDPVVIMQ…SRAIAHQLIK (135 aa)) folds into the Nudix hydrolase domain. Positions 354, 370, 374, and 415 each coordinate Mg(2+). Residues 355-376 (GFIEPGETIEDAVRREVEEESG) carry the Nudix box motif. The Microbody targeting signal motif lies at 460 to 462 (PNL).

Belongs to the Nudix hydrolase family. NudC subfamily. In terms of assembly, homodimer. Homodimerization is essential for its catalytic activity and protein stability. Interacts (via ANK repeats) with BLMH. The cofactor is Mg(2+). Zn(2+) is required as a cofactor.

It localises to the cytoplasm. Its subcellular location is the peroxisome. It is found in the cytoplasmic granule. It catalyses the reaction a 5'-end NAD(+)-phospho-ribonucleoside in mRNA + H2O = a 5'-end phospho-adenosine-phospho-ribonucleoside in mRNA + beta-nicotinamide D-ribonucleotide + 2 H(+). The catalysed reaction is NAD(+) + H2O = beta-nicotinamide D-ribonucleotide + AMP + 2 H(+). It carries out the reaction NADH + H2O = reduced beta-nicotinamide D-ribonucleotide + AMP + 2 H(+). The enzyme catalyses NADPH + H2O = reduced beta-nicotinamide D-ribonucleotide + adenosine 2',5'-bisphosphate + 2 H(+). MRNA decapping enzyme that specifically removes the nicotinamide adenine dinucleotide (NAD) cap from a subset of mRNAs by hydrolyzing the diphosphate linkage to produce nicotinamide mononucleotide (NMN) and 5' monophosphate mRNA. The NAD-cap is present at the 5'-end of some RNAs; in contrast to the canonical N7 methylguanosine (m7G) cap, the NAD cap promotes mRNA decay. Preferentially acts on NAD-capped transcripts in response to nutrient stress. Also acts on free nicotinamide adenine dinucleotide molecules: hydrolyzes NAD(H) into NMN(H) and AMP, and NADPH into NMNH and 2',5'-ADP. May act to regulate the concentration of peroxisomal nicotinamide nucleotide cofactors required for oxidative metabolism in this organelle. Regulates the levels of circadian clock components PER1, PER2, PER3 and CRY2 in the liver. The polypeptide is NAD-capped RNA hydrolase NUDT12 (Pongo abelii (Sumatran orangutan)).